Consider the following 321-residue polypeptide: Phosphoenolpyruvate transferase (321 aa).

7,8-didemethyl-8-hydroxy-5-deazariboflavin is bound at residue aspartate 51.

It belongs to the CofD family. As to quaternary structure, homodimer. Mg(2+) is required as a cofactor.

The enzyme catalyses enolpyruvoyl-2-diphospho-5'-guanosine + 7,8-didemethyl-8-hydroxy-5-deazariboflavin = dehydro coenzyme F420-0 + GMP + H(+). Its pathway is cofactor biosynthesis; coenzyme F420 biosynthesis. Functionally, catalyzes the transfer of the phosphoenolpyruvate moiety from enoylpyruvoyl-2-diphospho-5'-guanosine (EPPG) to 7,8-didemethyl-8-hydroxy-5-deazariboflavin (FO) with the formation of dehydro coenzyme F420-0 and GMP. This chain is Phosphoenolpyruvate transferase, found in Kitasatospora aureofaciens (Streptomyces aureofaciens).